A 496-amino-acid polypeptide reads, in one-letter code: MWQLVFLTLSCDLAVATAHSGSRKGMDIAAGKKQYQVQHGACSYTFLLPETDHCRSPSSAYVPNAVQRDAPLDYDDSVQRLQVLENIMENNTQWLMKLENYIQDNMKKEMVEIQQNAVQNQTAVMIEIGTNLLNQTAEQTRKLTDVEAQVLNQTTRLELQLLEHSLSTNKLEKQILDQTSEISKLQDKNSFLEKKVLDMEDKHIVQLRSIKEEKDQLQVLVSKQNSIIEELEKQLVTATVNNSVLQKQQHDLMETVNNLLTLMSTSNPSYSLLAKDEQIIFRDCGEAFKSGLTTSGVYTLTFPNSTEEIKAYCDMETGGGGWTVIQRREDGSVDFQRTWKEYKVGFGNPSGEHWLGNEFVSQVTGQKRYVLKIHLRDWEGNEAYSLYDHFYLSNEELNYRIHLKGLTGTAGKISSISQPGNDFSTKDADNDKCICKCSQMLTGGWWFDACGPSNLNGMYYPQRQNTNKFNGIKWYYWKGSGYSLKATTMMIRPADF.

An N-terminal signal peptide occupies residues 1–18 (MWQLVFLTLSCDLAVATA). Residues asparagine 90, asparagine 120, asparagine 134, asparagine 152, asparagine 241, and asparagine 304 are each glycosylated (N-linked (GlcNAc...) asparagine). A coiled-coil region spans residues 167–249 (STNKLEKQIL…VNNSVLQKQQ (83 aa)). The 221-residue stretch at 275-495 (KDEQIIFRDC…ATTMMIRPAD (221 aa)) folds into the Fibrinogen C-terminal domain. Residues cysteine 284 and cysteine 313 are joined by a disulfide bond. Positions 429, 431, 433, and 435 each coordinate Ca(2+). 2 disulfides stabilise this stretch: cysteine 433–cysteine 435 and cysteine 437–cysteine 450.

In terms of assembly, interacts with TEK/TIE2, competing for the same binding site as ANGPT1. Interacts with ITGA5. Interacts with SVEP1/polydom. Interacts with THBD; this interaction significantly inhibits the generation of activated PC and TAFIa/CPB2 by the thrombin/thrombomodulin complex.

The protein localises to the secreted. Its function is as follows. Binds to TEK/TIE2, competing for the ANGPT1 binding site, and modulating ANGPT1 signaling. Can induce tyrosine phosphorylation of TEK/TIE2 in the absence of ANGPT1. In the absence of angiogenic inducers, such as VEGF, ANGPT2-mediated loosening of cell-matrix contacts may induce endothelial cell apoptosis with consequent vascular regression. In concert with VEGF, it may facilitate endothelial cell migration and proliferation, thus serving as a permissive angiogenic signal. Involved in the regulation of lymphangiogenesis. The sequence is that of Angiopoietin-2 (ANGPT2) from Bos taurus (Bovine).